The following is a 501-amino-acid chain: NAD(P)H-quinone oxidoreductase chain 4, chloroplastic (501 aa).

A run of 14 helical transmembrane segments spans residues 4 to 24 (FPWLTIIVVLPISAGSLILFL), 35 to 55 (YTICICILELLITTYAFCYHF), 84 to 104 (GLSIGPILLTGFITTLATLAA), 111 to 129 (SRLLHLLMLAMYSGQIGSF), 134 to 154 (LLLFFIMWELELIPVYLLLSM), 168 to 188 (FILYTAGGSIFLLMGVLGMDL), 209 to 229 (ALEILFYFGFIIAFAVKSPII), 243 to 263 (HYSTCMLLAGILLKMGAYGLI), 273 to 293 (AHSIFSPWLVIVGTMQIIYAA), 306 to 326 (IAYSSVSHMGFIIIGIGSITD), 331 to 351 (GAILQIISHGFIGAALFFLAG), 387 to 407 (LALPGMSGFVAELIVFFGIIT), 417 to 437 (ILITFVMAIGMILTPIYSLSM), and 463 to 483 (LFVSISIFLPVIGIGIYPDFV).

It belongs to the complex I subunit 4 family.

It localises to the plastid. It is found in the chloroplast thylakoid membrane. The enzyme catalyses a plastoquinone + NADH + (n+1) H(+)(in) = a plastoquinol + NAD(+) + n H(+)(out). The catalysed reaction is a plastoquinone + NADPH + (n+1) H(+)(in) = a plastoquinol + NADP(+) + n H(+)(out). The sequence is that of NAD(P)H-quinone oxidoreductase chain 4, chloroplastic from Buxus microphylla (Littleleaf boxwood).